The primary structure comprises 255 residues: MSMPFYVSPEQLMKDRADFARKGIARGRSVAAVQYADGILFVSENPSQALHKVSEIYDRIAFAAVGRYNEFENLRIAGVRLADMRGYAYDRRDVTGRGLANAYAQTLGTIFSSGGEKPYEVELFVAEIGDEAAGDQLYRLTYDGQVADEHGFAVMGGAADTVASYLKERYAEGASLTDAVRLAVASLGHTDTEDRVIPADDLEVAVLDRTRSQPRKFARLRPARLEELLGERGPAQHAPEEPADPEPEPPIAPPG.

The disordered stretch occupies residues 224-255 (RLEELLGERGPAQHAPEEPADPEPEPPIAPPG).

It belongs to the peptidase T1A family. In terms of assembly, the 20S proteasome core is composed of 14 alpha and 14 beta subunits that assemble into four stacked heptameric rings, resulting in a barrel-shaped structure. The two inner rings, each composed of seven catalytic beta subunits, are sandwiched by two outer rings, each composed of seven alpha subunits. The catalytic chamber with the active sites is on the inside of the barrel. Has a gated structure, the ends of the cylinder being occluded by the N-termini of the alpha-subunits. Is capped by the proteasome-associated ATPase, ARC.

It is found in the cytoplasm. It participates in protein degradation; proteasomal Pup-dependent pathway. With respect to regulation, the formation of the proteasomal ATPase ARC-20S proteasome complex, likely via the docking of the C-termini of ARC into the intersubunit pockets in the alpha-rings, may trigger opening of the gate for substrate entry. Interconversion between the open-gate and close-gate conformations leads to a dynamic regulation of the 20S proteasome proteolysis activity. Its function is as follows. Component of the proteasome core, a large protease complex with broad specificity involved in protein degradation. This chain is Proteasome subunit alpha, found in Nocardioides sp. (strain ATCC BAA-499 / JS614).